The chain runs to 442 residues: MDAWPRCLERLEAEFPPEDVHTWLKPLQAEDRGDSIVLYAPNAFIVEQVRERYLPRIRELLAYFAGNGEVALAVGSRPRAPEPLPAPQAVASAPAAAPIVPFAGNLDSHYTFANFVEGRSNQLGLAAAIQAAQKPGDRAHNPLLLYGSTGLGKTHLMFAAGNALRQANPAAKVMYLRSEQFFSAMIRALQDKAMDQFKRQFQQIDALLIDDIQFFAGKDRTQEEFFHTFNALFDGRQQIILTCDRYPREVEGLEPRLKSRLAWGLSVAIDPPDFETRAAIVLAKARERGAEIPDDVAFLIAKKMRSNVRDLEGALNTLVARANFTGRSITVEFAQETLRDLLRAQQQAIGIPNIQKTVADYYGLQMKDLLSKRRTRSLARPRQVAMALAKELTEHSLPEIGDAFAGRDHTTVLHACRQIRTLMEADGKLREDWEKLIRKLSE.

The domain I, interacts with DnaA modulators stretch occupies residues 1-75 (MDAWPRCLER…GNGEVALAVG (75 aa)). The domain II stretch occupies residues 75–104 (GSRPRAPEPLPAPQAVASAPAAAPIVPFAG). Positions 105-322 (NLDSHYTFAN…GALNTLVARA (218 aa)) are domain III, AAA+ region. ATP contacts are provided by Gly150, Gly152, Lys153, and Thr154. The segment at 323–442 (NFTGRSITVE…WEKLIRKLSE (120 aa)) is domain IV, binds dsDNA.

It belongs to the DnaA family. Oligomerizes as a right-handed, spiral filament on DNA at oriC.

The protein resides in the cytoplasm. Its function is as follows. Plays an essential role in the initiation and regulation of chromosomal replication. ATP-DnaA binds to the origin of replication (oriC) to initiate formation of the DNA replication initiation complex once per cell cycle. Binds the DnaA box (a 9 base pair repeat at the origin) and separates the double-stranded (ds)DNA. Forms a right-handed helical filament on oriC DNA; dsDNA binds to the exterior of the filament while single-stranded (ss)DNA is stabiized in the filament's interior. The ATP-DnaA-oriC complex binds and stabilizes one strand of the AT-rich DNA unwinding element (DUE), permitting loading of DNA polymerase. After initiation quickly degrades to an ADP-DnaA complex that is not apt for DNA replication. Binds acidic phospholipids. The polypeptide is Chromosomal replication initiator protein DnaA (Xanthomonas campestris pv. campestris (strain B100)).